A 307-amino-acid polypeptide reads, in one-letter code: MGTVLSLSPSYRKATLFEDGAATVGHYTAVQNSKNAKDKNLKRHSIISVLPWKRIVAVSAKKKNSKKVQPNSSYQNNITHLNNENLKKSLSCANLSTFAQPPPAQPPAPPASQLSGSQTGGSSSVKKAPHPAVTSAGTPKRVIVQASTSELLRCLGEFLCRRCYRLKHLSPTDPVLWLRSVDRSLLLQGWQDQGFITPANVVFLYMLCRDVISSEVGSDHELQAVLLTCLYLSYSYMGNEISYPLKPFLVESCKEAFWDRCLSVINLMSSKMLQINADPHYFTQVFSDLKNESGQEDKKRLLLGLDR.

Glycine 2 is lipidated: N-myristoyl glycine. At serine 8 the chain carries Phosphoserine; by CDK5. The tract at residues 97-136 is disordered; it reads TFAQPPPAQPPAPPASQLSGSQTGGSSSVKKAPHPAVTSA. A compositionally biased stretch (pro residues) spans 100-110; that stretch reads QPPPAQPPAPP. The segment covering 111-124 has biased composition (low complexity); the sequence is ASQLSGSQTGGSSS. Residue threonine 138 is modified to Phosphothreonine; by CDK5.

The protein belongs to the cyclin-dependent kinase 5 activator family. As to quaternary structure, heterodimer composed of a catalytic subunit CDK5 and a regulatory subunit CDK5R1 (p25) and macromolecular complex composed of at least CDK5, CDK5R1 (p35) and CDK5RAP1 or CDK5RAP2 or CDK5RAP3. Only the heterodimer shows kinase activity. Interacts with EPHA4 and NGEF; may mediate the activation of NGEF by EPHA4. Interacts with RASGRF2. The complex p35/CDK5 interacts with CLOCK. In terms of processing, the p35 form is proteolytically cleaved by calpain, giving rise to the p25 form. P35 has a 5 to 10 fold shorter half-life compared to p25. The conversion results in deregulation of the CDK5 kinase: p25/CDK5 kinase displays an increased and altered tau phosphorylation in comparison to the p35/CDK5 kinase in vivo. Post-translationally, myristoylated. A proper myristoylation signal is essential for the proper distribution of p35. Ubiquitinated, leading to its degradation: degradation of p35 by proteasome results in down-regulation of CDK5 activity. During this process, CDK5 phosphorylates p35 and induces its ubiquitination and subsequent degradation. Ubiquitinated by the CRL2(FEM1B) complex, which recognizes the -Gly-Leu-Asp-Arg C-degron at the C-terminus, leading to its degradation. In terms of processing, phosphorylation at Ser-8 and Thr-138 by CDK5 prevents calpain-mediated proteolysis. As to expression, brain and neuron specific.

It localises to the cell membrane. The protein localises to the cell projection. The protein resides in the neuron projection. It is found in the nucleus. Its subcellular location is the cytoplasm. It localises to the perinuclear region. The protein localises to the perikaryon. Its function is as follows. p35 is a neuron specific activator of CDK5. The complex p35/CDK5 is required for neurite outgrowth and cortical lamination. Involved in dendritic spine morphogenesis by mediating the EFNA1-EPHA4 signaling. Activator of TPKII. The complex p35/CDK5 participates in the regulation of the circadian clock by modulating the function of CLOCK protein: phosphorylates CLOCK at 'Thr-451' and 'Thr-461' and regulates the transcriptional activity of the CLOCK-BMAL1 heterodimer in association with altered stability and subcellular distribution. The sequence is that of Cyclin-dependent kinase 5 activator 1 (CDK5R1) from Homo sapiens (Human).